A 119-amino-acid chain; its full sequence is Large ribosomal subunit protein uL18 (119 aa).

The protein belongs to the universal ribosomal protein uL18 family. Part of the 50S ribosomal subunit; part of the 5S rRNA/L5/L18/L25 subcomplex. Contacts the 5S and 23S rRNAs.

Functionally, this is one of the proteins that bind and probably mediate the attachment of the 5S RNA into the large ribosomal subunit, where it forms part of the central protuberance. This chain is Large ribosomal subunit protein uL18, found in Anaeromyxobacter sp. (strain Fw109-5).